Reading from the N-terminus, the 325-residue chain is ATPase ASNA1 homolog 2 (325 aa).

An ATP-binding site is contributed by 22–29; that stretch reads KGGVGKTT. The active site involves aspartate 51. Positions 231 and 258 each coordinate ATP. Residues cysteine 267 and cysteine 270 each coordinate Zn(2+).

This sequence belongs to the arsA ATPase family. As to quaternary structure, homodimer.

The protein localises to the cytoplasm. Its subcellular location is the endoplasmic reticulum. Functionally, ATPase required for the post-translational delivery of tail-anchored (TA) proteins to the endoplasmic reticulum. Recognizes and selectively binds the transmembrane domain of TA proteins in the cytosol. This complex then targets to the endoplasmic reticulum by membrane-bound receptors, where the tail-anchored protein is released for insertion. This process is regulated by ATP binding and hydrolysis. ATP binding drives the homodimer towards the closed dimer state, facilitating recognition of newly synthesized TA membrane proteins. ATP hydrolysis is required for insertion. Subsequently, the homodimer reverts towards the open dimer state, lowering its affinity for the membrane-bound receptor, and returning it to the cytosol to initiate a new round of targeting. In Paramecium tetraurelia, this protein is ATPase ASNA1 homolog 2.